A 372-amino-acid polypeptide reads, in one-letter code: NAD(P)H-quinone oxidoreductase subunit 1 (372 aa).

A run of 8 helical transmembrane segments spans residues 27 to 47, 97 to 117, 128 to 148, 166 to 186, 204 to 224, 266 to 286, 308 to 328, and 347 to 367; these read LIWLPLPMLLVLVAAVVGVLV, LLFTLGPVLVVVPVILSWLIV, VGVGIFLWISLSSVQPIGLLM, AAQSISYEIPLALAVLAVVMM, ILSWNIWRQPVGFLIFWICAL, VLSALLVSVLYLGGWGFPVPV, ATGIVMTVLKAYLLVFIAILL, and FLLPLALVNLLVTAALKLAFP.

It belongs to the complex I subunit 1 family. NDH-1 is composed of at least 11 different subunits.

It localises to the cellular thylakoid membrane. The enzyme catalyses a plastoquinone + NADH + (n+1) H(+)(in) = a plastoquinol + NAD(+) + n H(+)(out). It catalyses the reaction a plastoquinone + NADPH + (n+1) H(+)(in) = a plastoquinol + NADP(+) + n H(+)(out). NDH-1 shuttles electrons from an unknown electron donor, via FMN and iron-sulfur (Fe-S) centers, to quinones in the respiratory and/or the photosynthetic chain. The immediate electron acceptor for the enzyme in this species is believed to be plastoquinone. Couples the redox reaction to proton translocation, and thus conserves the redox energy in a proton gradient. The protein is NAD(P)H-quinone oxidoreductase subunit 1 of Synechococcus sp. (strain WH7803).